Consider the following 569-residue polypeptide: Glutamate--tRNA ligase (569 aa).

Positions 108–118 match the 'HIGH' region motif; it reads PNPDFVLHLGS.

The protein belongs to the class-I aminoacyl-tRNA synthetase family. Glutamate--tRNA ligase type 2 subfamily.

The protein localises to the cytoplasm. The catalysed reaction is tRNA(Glu) + L-glutamate + ATP = L-glutamyl-tRNA(Glu) + AMP + diphosphate. Catalyzes the attachment of glutamate to tRNA(Glu) in a two-step reaction: glutamate is first activated by ATP to form Glu-AMP and then transferred to the acceptor end of tRNA(Glu). This chain is Glutamate--tRNA ligase, found in Thermofilum pendens (strain DSM 2475 / Hrk 5).